We begin with the raw amino-acid sequence, 72 residues long: Translation initiation factor IF-1 2 (72 aa).

An S1-like domain is found at methionine 1–lysine 72.

This sequence belongs to the IF-1 family. In terms of assembly, component of the 30S ribosomal translation pre-initiation complex which assembles on the 30S ribosome in the order IF-2 and IF-3, IF-1 and N-formylmethionyl-tRNA(fMet); mRNA recruitment can occur at any time during PIC assembly.

The protein localises to the cytoplasm. Its function is as follows. One of the essential components for the initiation of protein synthesis. Stabilizes the binding of IF-2 and IF-3 on the 30S subunit to which N-formylmethionyl-tRNA(fMet) subsequently binds. Helps modulate mRNA selection, yielding the 30S pre-initiation complex (PIC). Upon addition of the 50S ribosomal subunit IF-1, IF-2 and IF-3 are released leaving the mature 70S translation initiation complex. In Chromobacterium violaceum (strain ATCC 12472 / DSM 30191 / JCM 1249 / CCUG 213 / NBRC 12614 / NCIMB 9131 / NCTC 9757 / MK), this protein is Translation initiation factor IF-1 2.